Here is a 329-residue protein sequence, read N- to C-terminus: Beta-ketoacyl-[acyl-carrier-protein] synthase III (329 aa).

Catalysis depends on residues Cys-123 and His-256. The ACP-binding stretch occupies residues 257–261; it reads QANIR. Asn-286 is an active-site residue.

The protein belongs to the thiolase-like superfamily. FabH family. As to quaternary structure, homodimer.

It localises to the cytoplasm. The catalysed reaction is malonyl-[ACP] + acetyl-CoA + H(+) = 3-oxobutanoyl-[ACP] + CO2 + CoA. It participates in lipid metabolism; fatty acid biosynthesis. Functionally, catalyzes the condensation reaction of fatty acid synthesis by the addition to an acyl acceptor of two carbons from malonyl-ACP. Catalyzes the first condensation reaction which initiates fatty acid synthesis and may therefore play a role in governing the total rate of fatty acid production. Possesses both acetoacetyl-ACP synthase and acetyl transacylase activities. Its substrate specificity determines the biosynthesis of branched-chain and/or straight-chain of fatty acids. The chain is Beta-ketoacyl-[acyl-carrier-protein] synthase III from Burkholderia mallei (strain NCTC 10247).